Here is an 83-residue protein sequence, read N- to C-terminus: Protein CASPARIAN STRIP INTEGRITY FACTOR 1 (83 aa).

The first 22 residues, 1 to 22, serve as a signal peptide directing secretion; that stretch reads MGMSPLTVKKLGFIFMIVSASA. The interval 59 to 83 is disordered; sequence MNTKDYGNNSPSPRLERPPFKLIPN. Tyr64 carries the sulfotyrosine modification. Hydroxyproline occurs at positions 69 and 71.

As to quaternary structure, interacts with the specific receptor kinases GSO1 and GSO2. As to expression, expressed exclusively in the root stele.

Peptide hormone required for contiguous Casparian strip diffusion barrier formation in roots via the regulation of CASPs protein expression and distribution in a GSO1-GSO2 signaling pathway. The Casparian strip is required for ion homeostasis (e.g. iron and potassium ions). The polypeptide is Protein CASPARIAN STRIP INTEGRITY FACTOR 1 (Arabidopsis thaliana (Mouse-ear cress)).